Consider the following 718-residue polypeptide: Polyribonucleotide nucleotidyltransferase (718 aa).

Residues aspartate 497 and aspartate 503 each contribute to the Mg(2+) site. In terms of domain architecture, KH spans 564–623 (PRLLTMRIDPDMIGLVIGPGGKTVKSITEQTKTKIDIDDDGTVTISASEAEQAERAKQLI). The region spanning 633 to 701 (GEVYVGRVTR…NKGRLNLTRL (69 aa)) is the S1 motif domain.

The protein belongs to the polyribonucleotide nucleotidyltransferase family. Requires Mg(2+) as cofactor.

The protein resides in the cytoplasm. The catalysed reaction is RNA(n+1) + phosphate = RNA(n) + a ribonucleoside 5'-diphosphate. In terms of biological role, involved in mRNA degradation. Catalyzes the phosphorolysis of single-stranded polyribonucleotides processively in the 3'- to 5'-direction. In Gloeothece citriformis (strain PCC 7424) (Cyanothece sp. (strain PCC 7424)), this protein is Polyribonucleotide nucleotidyltransferase.